A 152-amino-acid polypeptide reads, in one-letter code: Ribosome maturation factor RimP (152 aa).

This sequence belongs to the RimP family.

The protein localises to the cytoplasm. Required for maturation of 30S ribosomal subunits. The chain is Ribosome maturation factor RimP from Fervidobacterium nodosum (strain ATCC 35602 / DSM 5306 / Rt17-B1).